A 457-amino-acid polypeptide reads, in one-letter code: ATP synthase subunit beta (457 aa).

147 to 154 (GGAGVGKT) serves as a coordination point for ATP.

The protein belongs to the ATPase alpha/beta chains family. As to quaternary structure, F-type ATPases have 2 components, CF(1) - the catalytic core - and CF(0) - the membrane proton channel. CF(1) has five subunits: alpha(3), beta(3), gamma(1), delta(1), epsilon(1). CF(0) has three main subunits: a(1), b(2) and c(9-12). The alpha and beta chains form an alternating ring which encloses part of the gamma chain. CF(1) is attached to CF(0) by a central stalk formed by the gamma and epsilon chains, while a peripheral stalk is formed by the delta and b chains.

It is found in the cell inner membrane. The enzyme catalyses ATP + H2O + 4 H(+)(in) = ADP + phosphate + 5 H(+)(out). Functionally, produces ATP from ADP in the presence of a proton gradient across the membrane. The catalytic sites are hosted primarily by the beta subunits. In Haemophilus influenzae (strain PittGG), this protein is ATP synthase subunit beta.